We begin with the raw amino-acid sequence, 685 residues long: Sodium-dependent phosphate transporter 1 (685 aa).

Transmembrane regions (helical) follow at residues 25–45, 66–86, 106–126, 162–182, 201–221, and 234–254; these read FLWM…SVGA, ACIL…AKVS, LMAG…AASF, IVLS…LLFY, ALPI…MYSG, and GIIL…WFFV. Residues 482–492 show a composition bias toward acidic residues; it reads VEAEEQEEGSI. The tract at residues 482 to 513 is disordered; sequence VEAEEQEEGSIEDVATDRKSSSSSLEERHDQD. Residues 496–513 are compositionally biased toward basic and acidic residues; the sequence is ATDRKSSSSSLEERHDQD. A run of 4 helical transmembrane segments spans residues 517–537, 565–585, 606–626, and 656–676; these read VSLL…FAHG, ATPI…LWVW, FSIE…GLPI, and IFLA…AIMA.

Belongs to the inorganic phosphate transporter (PiT) (TC 2.A.20) family.

The protein localises to the cell membrane. It carries out the reaction 2 Na(+)(out) + phosphate(out) = 2 Na(+)(in) + phosphate(in). Its function is as follows. Sodium-phosphate symporter which preferentially transports the monovalent form of phosphate with a stoichiometry of two sodium ions per phosphate ion. This chain is Sodium-dependent phosphate transporter 1 (slc20a1), found in Xenopus tropicalis (Western clawed frog).